The chain runs to 156 residues: Small ribosomal subunit protein uS7 (156 aa).

This sequence belongs to the universal ribosomal protein uS7 family. Part of the 30S ribosomal subunit. Contacts proteins S9 and S11.

One of the primary rRNA binding proteins, it binds directly to 16S rRNA where it nucleates assembly of the head domain of the 30S subunit. Is located at the subunit interface close to the decoding center, probably blocks exit of the E-site tRNA. This is Small ribosomal subunit protein uS7 from Streptococcus pyogenes serotype M12 (strain MGAS2096).